Reading from the N-terminus, the 254-residue chain is tRNA (guanine-N(7)-)-methyltransferase (254 aa).

Residues 1 to 11 show a composition bias toward basic and acidic residues; the sequence is MSISDNSREEL. The disordered stretch occupies residues 1 to 25; that stretch reads MSISDNSREELGELPAGRPLQSEFN. E83, E108, D135, and D158 together coordinate S-adenosyl-L-methionine. The active site involves D158. K162 contacts substrate. The segment at 164–169 is interaction with RNA; that stretch reads RHNKRR. Residues D194 and 232-235 each bind substrate; that span reads TKFE.

The protein belongs to the class I-like SAM-binding methyltransferase superfamily. TrmB family.

The catalysed reaction is guanosine(46) in tRNA + S-adenosyl-L-methionine = N(7)-methylguanosine(46) in tRNA + S-adenosyl-L-homocysteine. Its pathway is tRNA modification; N(7)-methylguanine-tRNA biosynthesis. In terms of biological role, catalyzes the formation of N(7)-methylguanine at position 46 (m7G46) in tRNA. In Corynebacterium efficiens (strain DSM 44549 / YS-314 / AJ 12310 / JCM 11189 / NBRC 100395), this protein is tRNA (guanine-N(7)-)-methyltransferase.